The sequence spans 311 residues: Phospholipid phosphatase 3 (311 aa).

Over 1-33 (MQNYKYDKAIVPESKNGGSPALNNNPRRSGSKR) the chain is Cytoplasmic. A Phosphoserine modification is found at serine 19. Residues 34–54 (VLLICLDLFCLFMAGLPFLII) traverse the membrane as a helical segment. Topologically, residues 55–85 (ETSTIKPYHRGFYCNDESIKYPLKTGETIND) are extracellular. Residues 86 to 106 (AVLCAVGIVIAILAIITGEFY) traverse the membrane as a helical segment. Topologically, residues 107-122 (RIYYLKKSRSTIQNPY) are cytoplasmic. Residues 109 to 110 (YY) carry the Dityrosine basolateral targeting motif motif. A helical transmembrane segment spans residues 123 to 143 (VAALYKQVGCFLFGCAISQSF). Residues 144–193 (TDIAKVSIGRLRPHFLSVCNPDFSQINCSEGYIQNYRCRGDDSKVQEARK) lie on the Extracellular side of the membrane. The phosphatase sequence motif I stretch occupies residues 148–156 (KVSIGRLRP). N-linked (GlcNAc...) asparagine glycosylation occurs at asparagine 170. The Integrin-binding motif motif lies at 182 to 184 (RGD). Residues 194-214 (SFFSGHASFSMYTMLYLVLYL) traverse the membrane as a helical segment. A phosphatase sequence motif II region spans residues 196-199 (FSGH). Histidine 199 (proton donors) is an active-site residue. At 215 to 225 (QARFTWRGARL) the chain is on the cytoplasmic side. Residues 226–243 (LRPLLQFTLIMMAFYTGL) traverse the membrane as a helical segment. The interval 244–255 (SRVSDHKHHPSD) is phosphatase sequence motif III. The Extracellular segment spans residues 244–257 (SRVSDHKHHPSDVL). Residue histidine 251 is the Nucleophile of the active site. Residues 258-278 (AGFAQGALVACCIVFFVSDLF) form a helical membrane-spanning segment. The tract at residues 275 to 311 (SDLFKTKTTLSLPAPAIRKEILSPVDIIDRNNHHNMM) is mediates interaction with CTNND1. Residues 279 to 311 (KTKTTLSLPAPAIRKEILSPVDIIDRNNHHNMM) lie on the Cytoplasmic side of the membrane.

Belongs to the PA-phosphatase related phosphoesterase family. As to quaternary structure, forms functional homodimers and homooligomers that are not required for substrate recognition and catalytic activity. Can also form heterooligomers with other PLPP2 and PLPP3. Interacts with CTNND1; negatively regulates the PLPP3-mediated stabilization of beta-catenin/CTNNB1. N-glycosylated. Contains high-mannose oligosaccharides. Ubiquitously expressed. Highly expressed in heart and placenta.

Its subcellular location is the cell membrane. The protein localises to the basolateral cell membrane. It localises to the endoplasmic reticulum membrane. The protein resides in the endoplasmic reticulum-Golgi intermediate compartment membrane. It is found in the golgi apparatus membrane. Its subcellular location is the golgi apparatus. The protein localises to the trans-Golgi network membrane. It localises to the membrane raft. The enzyme catalyses a 1,2-diacyl-sn-glycero-3-phosphate + H2O = a 1,2-diacyl-sn-glycerol + phosphate. It carries out the reaction 1,2-dihexadecanoyl-sn-glycero-3-phosphate + H2O = 1,2-dihexadecanoyl-sn-glycerol + phosphate. The catalysed reaction is 1,2-di-(9Z-octadecenoyl)-sn-glycero-3-phosphate + H2O = 1,2-di-(9Z-octadecenoyl)-sn-glycerol + phosphate. It catalyses the reaction a monoacyl-sn-glycero-3-phosphate + H2O = a monoacylglycerol + phosphate. The enzyme catalyses (9Z)-octadecenoyl-sn-glycero-3-phosphate + H2O = (9Z-octadecenoyl)-glycerol + phosphate. It carries out the reaction sphing-4-enine 1-phosphate + H2O = sphing-4-enine + phosphate. The catalysed reaction is an N-acylsphing-4-enine 1-phosphate + H2O = an N-acylsphing-4-enine + phosphate. It catalyses the reaction N-(octanoyl)-sphing-4-enine-1-phosphate + H2O = N-octanoylsphing-4-enine + phosphate. The enzyme catalyses N-(9Z-octadecenoyl)-ethanolamine phosphate + H2O = N-(9Z-octadecenoyl) ethanolamine + phosphate. It participates in lipid metabolism; phospholipid metabolism. Its activity is regulated as follows. Magnesium-independent phospholipid phosphatase. Insensitive to N-ethylmaleimide. Inhibited by sphingosine, zinc ions and modestly by propanolol. Its function is as follows. Magnesium-independent phospholipid phosphatase of the plasma membrane that catalyzes the dephosphorylation of a variety of glycerolipid and sphingolipid phosphate esters including phosphatidate/PA, lysophosphatidate/LPA, diacylglycerol pyrophosphate/DGPP, sphingosine 1-phosphate/S1P and ceramide 1-phosphate/C1P. Also acts on N-oleoyl ethanolamine phosphate/N-(9Z-octadecenoyl)-ethanolamine phosphate, a potential physiological compound. Has both an extracellular and an intracellular phosphatase activity, allowing the hydrolysis and the cellular uptake of these bioactive lipid mediators from the milieu, regulating signal transduction in different cellular processes. Through the dephosphorylation of extracellular sphingosine-1-phosphate and the regulation of its extra- and intracellular availability, plays a role in vascular homeostasis, regulating endothelial cell migration, adhesion, survival, proliferation and the production of pro-inflammatory cytokines. By maintaining the appropriate levels of this lipid in the cerebellum, also ensure its proper development and function. Through its intracellular lipid phosphatase activity may act in early compartments of the secretory pathway, regulating the formation of Golgi to endoplasmic reticulum retrograde transport carriers. Independently of this phosphatase activity may also function in the Wnt signaling pathway and the stabilization of beta-catenin/CTNNB1, thereby regulating cell proliferation, migration and differentiation in angiogenesis or yet in tumor growth. Also plays a role in integrin-mediated cell-cell adhesion in angiogenesis. This Homo sapiens (Human) protein is Phospholipid phosphatase 3.